A 579-amino-acid polypeptide reads, in one-letter code: Cytochrome P450 monooxygenase ORF6 (579 aa).

Residue asparagine 2 is glycosylated (N-linked (GlcNAc...) asparagine). The helical transmembrane segment at 7–29 (PLGSFVGTTLLLFILYKLVKLAY) threads the bilayer. N-linked (GlcNAc...) asparagine glycans are attached at residues asparagine 194 and asparagine 390. Cysteine 512 is a heme binding site.

This sequence belongs to the cytochrome P450 family. Requires heme as cofactor.

The protein localises to the membrane. It participates in sesquiterpene biosynthesis. Its function is as follows. Cytochrome P450 monooxygenase; part of the gene cluster that mediates the biosynthesis of PR-toxin, a bicyclic sesquiterpene belonging to the eremophilane class and acting as a mycotoxin. The first step of the pathway is catalyzed by the aristolochene synthase which performs the cyclization of trans,trans-farnesyl diphosphate (FPP) to the bicyclic sesquiterpene aristolochene. Following the formation of aristolochene, the non-oxygenated aristolochene is converted to the trioxygenated intermediate eremofortin B, via 7-epi-neopetasone. This conversion appears to involve three enzymes, a hydroxysterol oxidase-like enzyme, the quinone-oxidase prx3 that forms the quinone-type-structure in the bicyclic nucleus of aristolochene with the C8-oxo group and the C-3 hydroxyl group, and the P450 monooxygenase ORF6 that introduces the epoxide at the double bond between carbons 1 and 2. No monoxy or dioxy-intermediates have been reported to be released to the broth, so these three early oxidative reactions may be coupled together. Eremofortin B is further oxidized by another P450 monooxygenase, that introduces a second epoxide between carbons 7 and 11 prior to acetylation to eremofortin A by the acetyltransferase ORF8. The second epoxidation may be performed by a second P450 monooxygenase. After the acetylation step, eremofortin A is converted to eremofortin C and then to PR-toxin. First the conversion of eremofortin A to eremofortin C proceeds by oxidation of the side chain of the molecule at C-12 and is catalyzed by the short-chain oxidoreductase prx1. The cytochrome P450 monooxygenase ORF6 is probably also involved in this step. The primary alcohol formed at C-12 is finally oxidized by the short-chain alcohol dehydrogenase prx4 that forms PR-toxin. In Penicillium roqueforti (strain FM164), this protein is Cytochrome P450 monooxygenase ORF6.